The primary structure comprises 131 residues: Profilin-4 (131 aa).

C13 and C115 are disulfide-bonded. The short motif at 81 to 97 (AVIRGKKGAGGITVKKT) is the Involved in PIP2 interaction element. At T111 the chain carries Phosphothreonine.

Belongs to the profilin family. As to quaternary structure, occurs in many kinds of cells as a complex with monomeric actin in a 1:1 ratio. In terms of processing, phosphorylated by MAP kinases.

The protein localises to the cytoplasm. The protein resides in the cytoskeleton. Binds to actin and affects the structure of the cytoskeleton. At high concentrations, profilin prevents the polymerization of actin, whereas it enhances it at low concentrations. This Olea europaea (Common olive) protein is Profilin-4.